Reading from the N-terminus, the 1621-residue chain is ABC transporter A family member 2 (1621 aa).

The next 7 membrane-spanning stretches (helical) occupy residues 30 to 50, 234 to 254, 276 to 296, 309 to 329, 338 to 358, 365 to 385, and 405 to 425; these read ILFPIIVILVIFAILVLVMAF, SVFITAALMIFGFRLITDLVI, ISWMITSLVTALPVNLIISII, GVVIFTLILYLLTLLLLAFIL, FCGLLSFVIIIAINIGGIFVA, GAKLFLCLISPIAIACSIFAM, and NQVIGMLVLDIFFYIFLVWYL. The region spanning 484 to 717 is the ABC transporter 1 domain; it reads ISIRNLRKEY…FGCGYLLTCS (234 aa). ATP is bound at residue 520-527; sequence GPNGSGKS. The next 7 helical transmembrane spans lie at 856-876, 1033-1053, 1083-1103, 1111-1131, 1142-1162, 1183-1203, and 1227-1247; these read FFLTLVIPLVFIIGSIIMYKA, IVYFIIIMMAGYALMAGSFAG, VWDYFFSFILILLTTCILAGI, FGLMFLCLILFCVSVVPLSYL, ATGAITAIHFAIGIIFVIISL, VDIVFCILSPLFAYSRILFLV, and GSPMIILAAHCIVWVSWIMIL. The ABC transporter 2 domain occupies 1293–1528; sequence LQFRNLHKLF…FGAGYTFDVK (236 aa). 1331-1338 provides a ligand contact to ATP; the sequence is GLNGAGKT.

It belongs to the ABC transporter superfamily. ABCA family.

Its subcellular location is the membrane. The polypeptide is ABC transporter A family member 2 (abcA2) (Dictyostelium discoideum (Social amoeba)).